Here is an 865-residue protein sequence, read N- to C-terminus: Protein translocase subunit SecA (865 aa).

ATP is bound by residues glutamine 93, 111-115, and aspartate 501; that span reads GEGKT. Zn(2+)-binding residues include cysteine 841, cysteine 843, cysteine 852, and cysteine 853.

It belongs to the SecA family. In terms of assembly, monomer and homodimer. Part of the essential Sec protein translocation apparatus which comprises SecA, SecYEG and auxiliary proteins SecDF-YajC and YidC. It depends on Zn(2+) as a cofactor.

It is found in the cell inner membrane. The protein localises to the cytoplasm. The enzyme catalyses ATP + H2O + cellular proteinSide 1 = ADP + phosphate + cellular proteinSide 2.. Functionally, part of the Sec protein translocase complex. Interacts with the SecYEG preprotein conducting channel. Has a central role in coupling the hydrolysis of ATP to the transfer of proteins into and across the cell membrane, serving as an ATP-driven molecular motor driving the stepwise translocation of polypeptide chains across the membrane. This Helicobacter pylori (strain HPAG1) protein is Protein translocase subunit SecA.